Here is an 848-residue protein sequence, read N- to C-terminus: Adenylate cyclase (848 aa).

Residues 1–535 (MYLYIETLKQ…DVSHHFPLRL (535 aa)) are catalytic. A regulatory region spans residues 541–848 (KALYSPCEIR…DTPLLQQYFS (308 aa)). Histidine 609 carries the post-translational modification Phosphohistidine; by CRR.

The protein belongs to the adenylyl cyclase class-1 family.

The protein localises to the cytoplasm. The enzyme catalyses ATP = 3',5'-cyclic AMP + diphosphate. This is Adenylate cyclase (cyaA) from Shigella flexneri.